We begin with the raw amino-acid sequence, 155 residues long: Large ribosomal subunit protein bL17 (155 aa).

It belongs to the bacterial ribosomal protein bL17 family. As to quaternary structure, part of the 50S ribosomal subunit. Contacts protein L32.

This Bifidobacterium adolescentis (strain ATCC 15703 / DSM 20083 / NCTC 11814 / E194a) protein is Large ribosomal subunit protein bL17.